The primary structure comprises 1171 residues: Pyruvate-flavodoxin oxidoreductase (1171 aa).

4Fe-4S ferredoxin-type domains are found at residues 682–711 (EVPV…PALL) and 736–767 (YHLA…MQSL). [4Fe-4S] cluster is bound by residues C691, C694, C697, C701, C745, C748, C751, C755, C811, C814, C839, and C1072.

This sequence belongs to the pyruvate:ferredoxin/flavodoxin oxidoreductase family. The cofactor is [4Fe-4S] cluster.

The enzyme catalyses oxidized [flavodoxin] + pyruvate + CoA + 2 H(+) = reduced [flavodoxin] + acetyl-CoA + CO2. In terms of biological role, oxidoreductase required for the transfer of electrons from pyruvate to flavodoxin, which reduces nitrogenase. In Klebsiella pneumoniae, this protein is Pyruvate-flavodoxin oxidoreductase (nifJ).